A 95-amino-acid polypeptide reads, in one-letter code: Cytochrome b (95 aa).

3 helical membrane-spanning segments follow: residues 1-16 (GLCL…FLAM), 40-61 (WLIR…YLHI), and 76-95 (WNIG…VGYV). H46 and H60 together coordinate heme b.

The protein belongs to the cytochrome b family. In terms of assembly, the cytochrome bc1 complex contains 3 respiratory subunits (MT-CYB, CYC1 and UQCRFS1), 2 core proteins (UQCRC1 and UQCRC2) and probably 6 low-molecular weight proteins. The cofactor is heme b.

The protein resides in the mitochondrion inner membrane. Its function is as follows. Component of the ubiquinol-cytochrome c reductase complex (complex III or cytochrome b-c1 complex) that is part of the mitochondrial respiratory chain. The b-c1 complex mediates electron transfer from ubiquinol to cytochrome c. Contributes to the generation of a proton gradient across the mitochondrial membrane that is then used for ATP synthesis. The sequence is that of Cytochrome b (mt-cyb) from Gomphosus varius (Bird wrasse).